The chain runs to 477 residues: MSRLSRALQLTDIDDFITPSQICIKPVQIDKARSKTGAKIKIKGDGCFEESESGNLKLNKVDISLQDCLACSGCITSAEEVLITQQSREELLKVLQENSKNKASEDWDNVRTIVFTLATQPILSLAYRYQIGVEDAARHLNGYFRSLGADYVLSTKVADDIALLECRQEFVDRYRENENLTMLSSSCPGWVCYAEKTHGNFLLPYVSTTRSPQQIMGVLVKQILADKMNVPASRIYHVTVMPCYDKKLEASREDFFSKANNSRDVDCVITSVEVEQLLSEAQQPLSQYDLLDLDWPWSNVRPEFMVWAHEKTLSGGYAEHIFKYAAKHIFNEDLKTELEFKQLKNRDFREIILKQNGKTVLKFAIANGFRNIQNLVQKLKREKVSNYHFVEVMACPSGCINGGAQIRPTTGQHVRELTRKLEELYQNLPRSEPENSLTKHIYNDFLDGFQSDKSYDVLHTRYHDVVSELSISLNINW.

Positions 23, 68, 71, 74, 187, 243, 395, and 399 each coordinate [4Fe-4S] cluster.

This sequence belongs to the NARF family.

In terms of biological role, component of the cytosolic iron-sulfur (Fe/S) protein assembly machinery. Required for maturation of extramitochondrial Fe/S proteins. The protein is Probable cytosolic Fe-S cluster assembly factor CG17683 of Drosophila melanogaster (Fruit fly).